A 552-amino-acid polypeptide reads, in one-letter code: Threonylcarbamoyladenosine tRNA methylthiotransferase (552 aa).

Residues 31–61 (YENKKTVTVRAKKRSQIRLESQEEEEKPKPT) are disordered. The MTTase N-terminal domain maps to 71–178 (QKVFVKTWGC…VVEVVEETLK (108 aa)). [4Fe-4S] cluster is bound by residues Cys80, Cys115, Cys144, Cys221, Cys225, and Cys228. Residues 207–438 (RKNPLIEIIS…DLFYSYEPYA (232 aa)) enclose the Radical SAM core domain. The region spanning 438–500 (ADRVGEIYTV…KFSMVGEILD (63 aa)) is the TRAM domain. A helical membrane pass occupies residues 532 to 552 (FGIALVLGSLAFLIQLVVRLL).

Belongs to the methylthiotransferase family. CDKAL1 subfamily. The cofactor is [4Fe-4S] cluster.

It localises to the membrane. It catalyses the reaction N(6)-L-threonylcarbamoyladenosine(37) in tRNA + (sulfur carrier)-SH + AH2 + 2 S-adenosyl-L-methionine = 2-methylsulfanyl-N(6)-L-threonylcarbamoyladenosine(37) in tRNA + (sulfur carrier)-H + 5'-deoxyadenosine + L-methionine + A + S-adenosyl-L-homocysteine + 2 H(+). Functionally, catalyzes the methylthiolation of N6-threonylcarbamoyladenosine (t(6)A), leading to the formation of 2-methylthio-N6-threonylcarbamoyladenosine (ms(2)t(6)A) at position 37 in tRNAs that read codons beginning with adenine. In Drosophila melanogaster (Fruit fly), this protein is Threonylcarbamoyladenosine tRNA methylthiotransferase.